We begin with the raw amino-acid sequence, 172 residues long: Small ribosomal subunit protein uS13 (172 aa).

The interval 131 to 172 (GQRTRTTGRTGVTVGVRRSKAAQAAQQQQKAQASSGGEKKQG) is disordered. The span at 134–163 (TRTTGRTGVTVGVRRSKAAQAAQQQQKAQA) shows a compositional bias: low complexity.

This sequence belongs to the universal ribosomal protein uS13 family. As to quaternary structure, part of the 30S ribosomal subunit. Forms a loose heterodimer with protein S19. Forms two bridges to the 50S subunit in the 70S ribosome.

Its function is as follows. Located at the top of the head of the 30S subunit, it contacts several helices of the 16S rRNA. In the 70S ribosome it contacts the 23S rRNA (bridge B1a) and protein L5 of the 50S subunit (bridge B1b), connecting the 2 subunits; these bridges are implicated in subunit movement. The polypeptide is Small ribosomal subunit protein uS13 (Sulfurisphaera tokodaii (strain DSM 16993 / JCM 10545 / NBRC 100140 / 7) (Sulfolobus tokodaii)).